A 635-amino-acid chain; its full sequence is DNA mismatch repair protein MutL (635 aa).

The disordered stretch occupies residues 359–399; sequence GTNKYAQPEAAKSSAAEQAVARERSSARERAAPAYKEDHPY. Residues 364–377 show a composition bias toward low complexity; it reads AQPEAAKSSAAEQA. Residues 378-399 are compositionally biased toward basic and acidic residues; it reads VARERSSARERAAPAYKEDHPY.

Belongs to the DNA mismatch repair MutL/HexB family.

Functionally, this protein is involved in the repair of mismatches in DNA. It is required for dam-dependent methyl-directed DNA mismatch repair. May act as a 'molecular matchmaker', a protein that promotes the formation of a stable complex between two or more DNA-binding proteins in an ATP-dependent manner without itself being part of a final effector complex. This Yersinia pseudotuberculosis serotype O:1b (strain IP 31758) protein is DNA mismatch repair protein MutL.